Reading from the N-terminus, the 649-residue chain is Replication protein E1 (649 aa).

The short motif at 83–85 (KRK) is the Nuclear localization signal element. A phosphoserine; by host mark is found at serine 89, serine 93, and serine 107. The Nuclear export signal motif lies at 106-115 (ISPRLDAIKL). The disordered stretch occupies residues 138-169 (GYSEVEAGTGTQVEKHGVPENGGDGQEKDTGR). Residues 187 to 353 (REHAGTAGIL…QTVIEHGLAD (167 aa)) form a DNA-binding region region. Positions 452-602 (IEFIPFLSKF…FPFDRNGNAV (151 aa)) constitute an SF3 helicase domain. 478–485 (GPPDTGKS) provides a ligand contact to ATP. Lysine 559 participates in a covalent cross-link: Glycyl lysine isopeptide (Lys-Gly) (interchain with G-Cter in SUMO).

It belongs to the papillomaviridae E1 protein family. Can form hexamers. Interacts with E2 protein; this interaction increases E1 DNA binding specificity. Interacts with host DNA polymerase subunit POLA2. Interacts with host single stranded DNA-binding protein RPA1. Interacts with host TOP1; this interaction stimulates the enzymatic activity of TOP1. Post-translationally, phosphorylated. In terms of processing, sumoylated.

The protein localises to the host nucleus. The catalysed reaction is Couples ATP hydrolysis with the unwinding of duplex DNA by translocating in the 3'-5' direction.. It carries out the reaction ATP + H2O = ADP + phosphate + H(+). Its function is as follows. ATP-dependent DNA 3'-5' helicase required for initiation of viral DNA replication. It forms a complex with the viral E2 protein. The E1-E2 complex binds to the replication origin which contains binding sites for both proteins. During the initial step, a dimer of E1 interacts with a dimer of protein E2 leading to a complex that binds the viral origin of replication with high specificity. Then, a second dimer of E1 displaces the E2 dimer in an ATP-dependent manner to form the E1 tetramer. Following this, two E1 monomers are added to each half of the site, which results in the formation of two E1 trimers on the viral ori. Subsequently, two hexamers will be created. The double hexamer acts as a bi-directional helicase machinery and unwinds the viral DNA and then recruits the host DNA polymerase to start replication. The chain is Replication protein E1 from Homo sapiens (Human).